Here is a 150-residue protein sequence, read N- to C-terminus: Large ribosomal subunit protein uL23 (150 aa).

Residues 1-24 are disordered; that stretch reads MNKENKTQAVNKAKNTAKVAKKGS. Residues 7 to 18 are compositionally biased toward low complexity; that stretch reads TQAVNKAKNTAK.

It belongs to the universal ribosomal protein uL23 family.

The polypeptide is Large ribosomal subunit protein uL23 (RPL23A) (Tetrahymena thermophila (strain SB210)).